We begin with the raw amino-acid sequence, 159 residues long: Cyclic pyranopterin monophosphate synthase (159 aa).

Residues 76–78 (MCH) and 114–115 (ME) contribute to the substrate site. Asp-129 is an active-site residue.

It belongs to the MoaC family. As to quaternary structure, homohexamer; trimer of dimers.

It carries out the reaction (8S)-3',8-cyclo-7,8-dihydroguanosine 5'-triphosphate = cyclic pyranopterin phosphate + diphosphate. Its pathway is cofactor biosynthesis; molybdopterin biosynthesis. In terms of biological role, catalyzes the conversion of (8S)-3',8-cyclo-7,8-dihydroguanosine 5'-triphosphate to cyclic pyranopterin monophosphate (cPMP). In Natranaerobius thermophilus (strain ATCC BAA-1301 / DSM 18059 / JW/NM-WN-LF), this protein is Cyclic pyranopterin monophosphate synthase.